The following is a 188-amino-acid chain: Large ribosomal subunit protein eL18 (188 aa).

The disordered stretch occupies residues 147-188 (EAEKHFGPAPGVPHSHTKPYVRSKGRKFERARGRRASRAYKN). 2 stretches are compositionally biased toward basic residues: residues 161–171 (SHTKPYVRSKG) and 178–188 (RGRRASRAYKN).

Belongs to the eukaryotic ribosomal protein eL18 family.

Its subcellular location is the cytoplasm. The protein is Large ribosomal subunit protein eL18 (rpl-18) of Caenorhabditis elegans.